A 434-amino-acid chain; its full sequence is Methylenetetrahydrofolate--tRNA-(uracil-5-)-methyltransferase TrmFO (434 aa).

FAD is bound at residue 9–14 (GAGLAG).

Belongs to the MnmG family. TrmFO subfamily. Requires FAD as cofactor.

Its subcellular location is the cytoplasm. It catalyses the reaction uridine(54) in tRNA + (6R)-5,10-methylene-5,6,7,8-tetrahydrofolate + NADH + H(+) = 5-methyluridine(54) in tRNA + (6S)-5,6,7,8-tetrahydrofolate + NAD(+). The catalysed reaction is uridine(54) in tRNA + (6R)-5,10-methylene-5,6,7,8-tetrahydrofolate + NADPH + H(+) = 5-methyluridine(54) in tRNA + (6S)-5,6,7,8-tetrahydrofolate + NADP(+). Functionally, catalyzes the folate-dependent formation of 5-methyl-uridine at position 54 (M-5-U54) in all tRNAs. The chain is Methylenetetrahydrofolate--tRNA-(uracil-5-)-methyltransferase TrmFO from Fusobacterium nucleatum subsp. nucleatum (strain ATCC 25586 / DSM 15643 / BCRC 10681 / CIP 101130 / JCM 8532 / KCTC 2640 / LMG 13131 / VPI 4355).